A 288-amino-acid polypeptide reads, in one-letter code: Acetyl-coenzyme A carboxylase carboxyl transferase subunit beta (288 aa).

In terms of domain architecture, CoA carboxyltransferase N-terminal spans 32–288 (MWAKCPSCKR…LRLHSLEGWR (257 aa)). The Zn(2+) site is built by cysteine 36, cysteine 39, cysteine 54, and cysteine 57. The C4-type zinc-finger motif lies at 36–57 (CPSCKRTLYTKEMGAEKICPHC).

It belongs to the AccD/PCCB family. Acetyl-CoA carboxylase is a heterohexamer composed of biotin carboxyl carrier protein (AccB), biotin carboxylase (AccC) and two subunits each of ACCase subunit alpha (AccA) and ACCase subunit beta (AccD). Zn(2+) is required as a cofactor.

Its subcellular location is the cytoplasm. The catalysed reaction is N(6)-carboxybiotinyl-L-lysyl-[protein] + acetyl-CoA = N(6)-biotinyl-L-lysyl-[protein] + malonyl-CoA. It participates in lipid metabolism; malonyl-CoA biosynthesis; malonyl-CoA from acetyl-CoA: step 1/1. Functionally, component of the acetyl coenzyme A carboxylase (ACC) complex. Biotin carboxylase (BC) catalyzes the carboxylation of biotin on its carrier protein (BCCP) and then the CO(2) group is transferred by the transcarboxylase to acetyl-CoA to form malonyl-CoA. In Enterococcus faecalis (strain ATCC 700802 / V583), this protein is Acetyl-coenzyme A carboxylase carboxyl transferase subunit beta.